The sequence spans 278 residues: Protein MGF 505-3R (278 aa).

This sequence belongs to the asfivirus MGF 505 family.

Its function is as follows. Plays a role in virus cell tropism, and may be required for efficient virus replication in macrophages. The polypeptide is Protein MGF 505-3R (African swine fever virus (isolate Tick/Malawi/Lil 20-1/1983) (ASFV)).